Reading from the N-terminus, the 514-residue chain is Nucleus accumbens-associated protein 1 (514 aa).

Residues 30 to 94 (CDVSVVVKGH…CYTGRLSMNM (65 aa)) enclose the BTB domain. Residue K167 forms a Glycyl lysine isopeptide (Lys-Gly) (interchain with G-Cter in SUMO1); alternate linkage. Residue K167 forms a Glycyl lysine isopeptide (Lys-Gly) (interchain with G-Cter in SUMO2); alternate linkage. K182 is covalently cross-linked (Glycyl lysine isopeptide (Lys-Gly) (interchain with G-Cter in SUMO2)). Disordered regions lie at residues 183-218 (RLWDSSQKEAGGSGGNNGSRKMAKFSTPDLAPNRMP) and 241-279 (GPSMSERTSPGTSSAYTSDSPSSYHNEEDEEEDAGEEGT). S187 is modified (phosphoserine). Positions 242–251 (PSMSERTSPG) are enriched in polar residues. S245 is subject to Phosphoserine; by PKC. The segment covering 252–264 (TSSAYTSDSPSSY) has biased composition (low complexity). Over residues 267–279 (EEDEEEDAGEEGT) the composition is skewed to acidic residues. Residues K304, K438, K466, and K485 each participate in a glycyl lysine isopeptide (Lys-Gly) (interchain with G-Cter in SUMO2) cross-link. Residues 360 to 457 (GTNVYITRAQ…DMCTNARRVV (98 aa)) enclose the BEN domain. Residues S492 and S496 each carry the phosphoserine modification.

Homooligomer; mediated by the BTB domain. Both isoforms interact with HDAC3 and HDAC4. Interacts (via BTB domain) with CUL3, PSMD7 and RCOR1. Phosphorylated by protein kinase C (PKC). Highly expressed in the hippocampus, brain cortex, cerebellum and brainstem. Expressed in the nucleus accumbens, olfactory tubercle, the striatum, frontal and parietal cortex and ventral pallidum. Weakly expressed in the heart, liver, kidney, spleen, testis, and skeletal muscle. Isoform 2 is expressed in the brain and liver, less abundantly expressed in the brain than isoform 1.

The protein localises to the nucleus. Its subcellular location is the cytoplasm. In terms of biological role, functions as a transcriptional repressor. Isoform 1 is a stronger transcriptional repressor than isoform 2. Seems to function as a transcriptional corepressor in neuronal cells through recruitment of HDAC3 and HDAC4. Contributes to tumor progression, and tumor cell proliferation and survival. This may be mediated at least in part through repressing transcriptional activity of GADD45GIP1. Required for recruiting the proteasome from the nucleus to the cytoplasm and dendritic spines. In Rattus norvegicus (Rat), this protein is Nucleus accumbens-associated protein 1 (Nacc1).